Consider the following 192-residue polypeptide: Thiol-disulfide oxidoreductase ResA (192 aa).

The chain crosses the membrane as a helical; Signal-anchor for type II membrane protein span at residues 22–41; the sequence is SSILLILVAAVVFAIVSNMK. One can recognise a Thioredoxin domain in the interval 47 to 189; sequence YRVGDAAPDF…LEGYLNDIAP (143 aa). A disulfide bridge connects residues cysteine 89 and cysteine 92.

This sequence belongs to the thioredoxin family. ResA subfamily.

It localises to the cell membrane. It participates in protein modification; cytochrome c assembly. Functionally, thiol-disulfide oxidoreductase which is required in disulfide reduction during c-type cytochrome synthesis. May accept reducing equivalents from CcdA, leading to breakage of disulfide bonds in apocytochrome c; following this reduction heme can be covalently attached. The chain is Thiol-disulfide oxidoreductase ResA from Oceanobacillus iheyensis (strain DSM 14371 / CIP 107618 / JCM 11309 / KCTC 3954 / HTE831).